Consider the following 165-residue polypeptide: Transcriptional regulator MraZ (165 aa).

SpoVT-AbrB domains follow at residues 5–51 (TYEG…GEEL) and 80–123 (SAEL…NPER).

Belongs to the MraZ family. As to quaternary structure, forms oligomers.

The protein localises to the cytoplasm. It localises to the nucleoid. The sequence is that of Transcriptional regulator MraZ from Hyphomonas neptunium (strain ATCC 15444).